The chain runs to 185 residues: Elongation factor P (185 aa).

This sequence belongs to the elongation factor P family.

It is found in the cytoplasm. It functions in the pathway protein biosynthesis; polypeptide chain elongation. Its function is as follows. Involved in peptide bond synthesis. Stimulates efficient translation and peptide-bond synthesis on native or reconstituted 70S ribosomes in vitro. Probably functions indirectly by altering the affinity of the ribosome for aminoacyl-tRNA, thus increasing their reactivity as acceptors for peptidyl transferase. The sequence is that of Elongation factor P from Burkholderia lata (strain ATCC 17760 / DSM 23089 / LMG 22485 / NCIMB 9086 / R18194 / 383).